A 170-amino-acid polypeptide reads, in one-letter code: Cathelicidin antimicrobial peptide (170 aa).

The first 30 residues, 1-30, serve as a signal peptide directing secretion; the sequence is MKTQRDSPSLGRWSLVLLLLGLVMPLAIVA. Positions 31-131 are cleaved as a propeptide — cathelin-like domain (CLD); it reads QVLSYQEAVL…DISCDKDNRR (101 aa). 2 disulfide bridges follow: C86–C97 and C108–C125. Positions 150 to 162 are active core; sequence FKRIVQRIKDFLQ.

It belongs to the cathelicidin family. As to quaternary structure, monomer, homodimer or homotrimer (in vitro). Oligomerizes as tetra- or hexamer in solution (in vitro). Post-translationally, proteolytically cleaved by proteinase PRTN3 into antibacterial peptide LL-37. Proteolytically cleaved by cathepsin CTSG and neutrophil elastase ELANE. In terms of processing, resistant to proteolytic degradation in solution, and when bound to both zwitterionic (mimicking mammalian membranes) and negatively charged membranes (mimicking bacterial membranes). After secretion onto the skin surface, the CAMP gene product is processed by a serine protease-dependent mechanism into multiple novel antimicrobial peptides distinct from and shorter than cathelicidin LL-37. These peptides show enhanced antimicrobial action, acquiring the ability to kill skin pathogens such as S.aureus, E.coli and C.albicans. These peptides have lost the ability to stimulate CXCL8/IL8 release from keratinocytes. The peptides act synergistically, killing bacteria at lower concentrations when present together, and maintain activity at increased salt condition.

Its subcellular location is the secreted. It localises to the vesicle. Functionally, antimicrobial protein that is an integral component of the innate immune system. Binds to bacterial lipopolysaccharides (LPS). Acts via neutrophil N-formyl peptide receptors to enhance the release of CXCL2. Postsecretory processing generates multiple cathelicidin antimicrobial peptides with various lengths which act as a topical antimicrobial defense in sweat on skin. The unprocessed precursor form, cathelicidin antimicrobial peptide, inhibits the growth of Gram-negative E.coli and E.aerogenes with efficiencies comparable to that of the mature peptide LL-37 (in vitro). In terms of biological role, antimicrobial peptide that is an integral component of the innate immune system. Binds to bacterial lipopolysaccharides (LPS). Causes membrane permeabilization by forming transmembrane pores (in vitro). Causes lysis of E.coli. Exhibits antimicrobial activity against Gram-negative bacteria such as P.aeruginosa, S.typhimurium, E.aerogenes, E.coli and P.syringae, Gram-positive bacteria such as L.monocytogenes, S.epidermidis, S.pyogenes and S.aureus, as well as vancomycin-resistant enterococci (in vitro). Exhibits antimicrobial activity against methicillin-resistant S.aureus, P.mirabilis, and C.albicans in low-salt media, but not in media containing 100 mM NaCl (in vitro). Forms chiral supramolecular assemblies with quinolone signal (PQS) molecules of P.aeruginosa, which may lead to interference of bacterial quorum signaling and perturbance of bacterial biofilm formation. May form supramolecular fiber-like assemblies on bacterial membranes. Induces cytokine and chemokine producation as well as TNF/TNFA and CSF2/GMCSF production in normal human keratinocytes. Exhibits hemolytic activity against red blood cells. Exhibits antimicrobial activity against E.coli and B.megaterium (in vitro). This is Cathelicidin antimicrobial peptide from Nomascus concolor (Black crested gibbon).